The following is a 3127-amino-acid chain: Probable polyketide synthase 33 (3127 aa).

Positions 24–457 constitute a Ketosynthase family 3 (KS3) domain; the sequence is SGDVAVVGIG…GSNVCLILSE (434 aa). Residues Cys-196, His-335, and His-380 each act as for beta-ketoacyl synthase activity in the active site. An acyl/malonyl transferase region spans residues 660 to 693; the sequence is GVSADIIIGHSLGEISSAYCSGMIDFQTLCYLTY. Ser-670 (for acyl/malonyl transferase activity) is an active-site residue. The interval 958-1080 is N-terminal hotdog fold; that stretch reads GPSIHSLGNN…GNFSLFKHNI (123 aa). A PKS/mFAS DH domain is found at 958–1257; the sequence is GPSIHSLGNN…CTIVGSNPDS (300 aa). His-992 serves as the catalytic Proton acceptor; for dehydratase activity. The tract at residues 1096 to 1257 is C-terminal hotdog fold; the sequence is NFTTISKQDF…CTIVGSNPDS (162 aa). Asp-1168 functions as the Proton donor; for dehydratase activity in the catalytic mechanism. Positions 1369 to 1394 are disordered; that stretch reads SNNNNNNNNNNNNNNNNNNNNKNNGY. A compositionally biased stretch (low complexity) spans 1370 to 1394; it reads NNNNNNNNNNNNNNNNNNNNKNNGY. Residues 2539–2616 form the Carrier domain; the sequence is SNNEIIRSTI…QSIEIIKSAH (78 aa). Ser-2576 carries the post-translational modification O-(pantetheine 4'-phosphoryl)serine. The segment at 2617–2659 is disordered; the sequence is NKNNNNNNINNNNNNNNNNNNNNNNNNNNNNNNNNNNNNNNNN. The stretch at 2617 to 2671 forms a coiled coil; sequence NKNNNNNNINNNNNNNNNNNNNNNNNNNNNNNNNNNNNNNNNNLVKKEQQSLDEF. A helical transmembrane segment spans residues 2937–2957; it reads VLTLYNIPITIFIAILIIDIF.

Requires pantetheine 4'-phosphate as cofactor.

The protein resides in the membrane. Its function is as follows. Probable polyketide synthase. The protein is Probable polyketide synthase 33 (pks33) of Dictyostelium discoideum (Social amoeba).